Here is a 91-residue protein sequence, read N- to C-terminus: Acylphosphatase (91 aa).

Residues 5–91 (RLTAWVRGHV…RGSFTGFEER (87 aa)) form the Acylphosphatase-like domain. Catalysis depends on residues R20 and N38.

It belongs to the acylphosphatase family.

It carries out the reaction an acyl phosphate + H2O = a carboxylate + phosphate + H(+). The protein is Acylphosphatase (acyP) of Thermobifida fusca (strain YX).